Consider the following 164-residue polypeptide: MAAKEASFDVVSEVNMEEVKNAIQIALKELKNRFDFKGSIADIKLENDKLVVVAEDDYKVEQVKDILFGKLVKRNVPIKNIHFSESEKALGGTARQYGDLISGIDKENAKKINTAIKNSGIKVKSQIQEDKIRVTGKSRDDLQKVMALLRELDLPMALEFNNYR.

It belongs to the YajQ family.

Its function is as follows. Nucleotide-binding protein. This is Nucleotide-binding protein EF_1165 from Enterococcus faecalis (strain ATCC 700802 / V583).